The sequence spans 405 residues: Argininosuccinate synthase (405 aa).

Residues 10–18 (AYSGGLDTS) and alanine 37 contribute to the ATP site. Tyrosine 88 and serine 93 together coordinate L-citrulline. An ATP-binding site is contributed by glycine 118. Residues threonine 120, asparagine 124, and aspartate 125 each coordinate L-aspartate. An L-citrulline-binding site is contributed by asparagine 124. Arginine 128, serine 179, serine 188, glutamate 264, and tyrosine 276 together coordinate L-citrulline.

It belongs to the argininosuccinate synthase family. Type 1 subfamily. As to quaternary structure, homotetramer.

It is found in the cytoplasm. The enzyme catalyses L-citrulline + L-aspartate + ATP = 2-(N(omega)-L-arginino)succinate + AMP + diphosphate + H(+). It functions in the pathway amino-acid biosynthesis; L-arginine biosynthesis; L-arginine from L-ornithine and carbamoyl phosphate: step 2/3. The sequence is that of Argininosuccinate synthase from Pseudomonas aeruginosa (strain LESB58).